Consider the following 775-residue polypeptide: Glutamine--tRNA ligase (775 aa).

Position 2 is an N-acetylalanine (Ala-2). Ser-70 carries the post-translational modification Phosphoserine. Residues 270-280 (PEPNGILHIGH) carry the 'HIGH' region motif. Residues 271 to 273 (EPN) and 277 to 283 (HIGHAKA) each bind ATP. Asp-303 provides a ligand contact to L-glutamine. Lys-309 is subject to N6-acetyllysine. Residue Tyr-438 coordinates L-glutamine. ATP contacts are provided by residues Thr-457, 486–487 (RL), and 494–496 (VSK). The short motif at 493–497 (VVSKR) is the 'KMSKS' region element. Ser-495 is subject to Phosphoserine.

This sequence belongs to the class-I aminoacyl-tRNA synthetase family. Monomer. Part of a multisubunit complex that groups tRNA ligases for Arg (RARS1), Asp (DARS1), Gln (QARS1), Ile (IARS1), Leu (LARS1), Lys (KARS1), Met (MARS1) the bifunctional ligase for Glu and Pro (EPRS1) and the auxiliary subunits AIMP1/p43, AIMP2/p38 and EEF1E1/p18. Interacts with RARS1. Part of a complex composed of RARS1, QARS1 and AIMP1.

It is found in the cytoplasm. It localises to the cytosol. It carries out the reaction tRNA(Gln) + L-glutamine + ATP = L-glutaminyl-tRNA(Gln) + AMP + diphosphate. Functionally, glutamine--tRNA ligase. Plays a critical role in brain development. The chain is Glutamine--tRNA ligase (QARS1) from Bos taurus (Bovine).